A 426-amino-acid polypeptide reads, in one-letter code: ORC1-type DNA replication protein 1 (426 aa).

Residues 62 to 66, Tyr-211, and Arg-223 contribute to the ATP site; that span reads VGKTL.

It belongs to the CDC6/cdc18 family.

In terms of biological role, involved in regulation of DNA replication. The chain is ORC1-type DNA replication protein 1 (cdc6a) from Haloarcula marismortui (strain ATCC 43049 / DSM 3752 / JCM 8966 / VKM B-1809) (Halobacterium marismortui).